A 462-amino-acid chain; its full sequence is Cysteine--tRNA ligase (462 aa).

Position 27 (Cys27) interacts with Zn(2+). The 'HIGH' region signature appears at 29–39 (PTVYDLAHIGN). Residues Cys211, His236, and Glu240 each coordinate Zn(2+). The short motif at 270–274 (KMSKS) is the 'KMSKS' region element. Lys273 is an ATP binding site.

The protein belongs to the class-I aminoacyl-tRNA synthetase family. As to quaternary structure, monomer. Zn(2+) is required as a cofactor.

It is found in the cytoplasm. The enzyme catalyses tRNA(Cys) + L-cysteine + ATP = L-cysteinyl-tRNA(Cys) + AMP + diphosphate. The polypeptide is Cysteine--tRNA ligase (Anaplasma phagocytophilum (strain HZ)).